The chain runs to 89 residues: Small ribosomal subunit protein uS15 (89 aa).

The protein belongs to the universal ribosomal protein uS15 family. In terms of assembly, part of the 30S ribosomal subunit. Forms a bridge to the 50S subunit in the 70S ribosome, contacting the 23S rRNA.

In terms of biological role, one of the primary rRNA binding proteins, it binds directly to 16S rRNA where it helps nucleate assembly of the platform of the 30S subunit by binding and bridging several RNA helices of the 16S rRNA. Forms an intersubunit bridge (bridge B4) with the 23S rRNA of the 50S subunit in the ribosome. The polypeptide is Small ribosomal subunit protein uS15 (Pediococcus pentosaceus (strain ATCC 25745 / CCUG 21536 / LMG 10740 / 183-1w)).